The sequence spans 239 residues: Ribonuclease PH (239 aa).

Phosphate-binding positions include arginine 86 and 124–126; that span reads GTR.

Belongs to the RNase PH family. Homohexameric ring arranged as a trimer of dimers.

It carries out the reaction tRNA(n+1) + phosphate = tRNA(n) + a ribonucleoside 5'-diphosphate. Phosphorolytic 3'-5' exoribonuclease that plays an important role in tRNA 3'-end maturation. Removes nucleotide residues following the 3'-CCA terminus of tRNAs; can also add nucleotides to the ends of RNA molecules by using nucleoside diphosphates as substrates, but this may not be physiologically important. Probably plays a role in initiation of 16S rRNA degradation (leading to ribosome degradation) during starvation. The polypeptide is Ribonuclease PH (Rickettsia akari (strain Hartford)).